An 87-amino-acid polypeptide reads, in one-letter code: HssA/B-like protein 31 (87 aa).

The protein belongs to the hssA/B family.

This chain is HssA/B-like protein 31 (hssl31), found in Dictyostelium discoideum (Social amoeba).